We begin with the raw amino-acid sequence, 336 residues long: Probable RNA methyltransferase Anae109_4379 (336 aa).

Residue E86 is the Proton acceptor of the active site. Residues F93–Q322 form the Radical SAM core domain. C100 and C328 are disulfide-bonded. Residues C107, C111, and C114 each coordinate [4Fe-4S] cluster. S-adenosyl-L-methionine contacts are provided by residues G154–E155, S186, and S209–N211. C328 acts as the S-methylcysteine intermediate in catalysis.

This sequence belongs to the radical SAM superfamily. RlmN family. Requires [4Fe-4S] cluster as cofactor.

Its subcellular location is the cytoplasm. In Anaeromyxobacter sp. (strain Fw109-5), this protein is Probable RNA methyltransferase Anae109_4379.